Here is a 569-residue protein sequence, read N- to C-terminus: MASPALISETEAWKDLKAHLEGIKMTHLRELMGDTERCQSMMVEFDNIFLDYSRQQASPDTISKLYKLADAAHLKQKIDRMYNGDHINTTENRSVLHVALRAPRNSAICSDGKNVVPDVWNVLDKIKDFSDSVRNGSWIGATGKELKDVIAVGIGGSFLGPLFVHTALQTDPEASKNARGRELRFLANVDPIDVARNISGLNPETTLVVVVSKTFTTAETMLNARTLREWISSALGPSAVAKHMVAVSTNLPLVEKFGIDPNNAFAFWDWVGGRYSVCSAVGVLPLSLQYGFAVVEKFLQGAHSIDQHFSSAPFEKNIPVLLGLLSVWNVSFLGYPARAILPYSQALEKLAPHIQQVSMESNGKGVSIDGLPLPFESGEIDFGEPGTNGQHSFYQLIHQGRVIPCDFIGVVKSQQPVYLKGEVVNNHDELMSNFFAQPDALAYGKTPEELKKENVSEHLIPHKTFTGNRPSISILLPTLDAYRIGQLLAIYEHRVAVQGFVWGINSFDQWGVELGKSLATQVRKQLHGSRVKGEPVEEGFNFSTKTLLTRYLQATSDVPADPSTLLPNI.

E360 acts as the Proton donor in catalysis. Active-site residues include H391 and K516.

This sequence belongs to the GPI family. Homodimer.

The protein resides in the cytoplasm. The enzyme catalyses alpha-D-glucose 6-phosphate = beta-D-fructose 6-phosphate. Its pathway is carbohydrate degradation; glycolysis; D-glyceraldehyde 3-phosphate and glycerone phosphate from D-glucose: step 2/4. In Clarkia lewisii (Farewell-to-spring), this protein is Glucose-6-phosphate isomerase, cytosolic 1A (PGIC1-A).